Consider the following 345-residue polypeptide: Platelet-derived growth factor C (345 aa).

The signal sequence occupies residues 1–22 (MLLLGLLLLTSALAGRRHGAAA). The CUB domain occupies 46 to 163 (HEKIITVTSN…PGFCIHYTLL (118 aa)). N-linked (GlcNAc...) asparagine glycosylation occurs at N55. Cystine bridges form between C104–C124, C250–C294, C280–C335, and C287–C337.

The protein belongs to the PDGF/VEGF growth factor family. Homodimer; disulfide-linked. Interacts with PDGFRA homodimers, and with heterodimers formed by PDGFRA and PDGFRB. Post-translationally, proteolytic removal of the N-terminal CUB domain releasing the core domain is necessary for unmasking the receptor-binding epitopes of the core domain. Cleavage after basic residues in the hinge region (region connecting the CUB and growth factor domains) gives rise to the receptor-binding form.

It localises to the secreted. Growth factor that plays an essential role in the regulation of embryonic development, cell proliferation, cell migration, survival and chemotaxis. Potent mitogen and chemoattractant for cells of mesenchymal origin. Required for normal skeleton formation during embryonic development. Required for normal skin morphogenesis during embryonic development. Plays an important role in wound healing, in angiogenesis and blood vessel development. This chain is Platelet-derived growth factor C (PDGFC), found in Gallus gallus (Chicken).